Reading from the N-terminus, the 377-residue chain is Protein-arginine rhamnosyltransferase (377 aa).

Residue tyrosine 15 coordinates dTDP-beta-L-rhamnose. The active-site Proton acceptor is the aspartate 17. DTDP-beta-L-rhamnose contacts are provided by residues tyrosine 193, glutamine 255, and 271–275; that span reads RGEDS. Glutamate 273 is a catalytic residue.

Belongs to the glycosyltransferase 104 family.

It carries out the reaction dTDP-beta-L-rhamnose + L-arginyl-[protein] = N(omega)-(alpha-L-rhamnosyl)-L-arginyl-[protein] + dTDP + H(+). Its function is as follows. Protein-arginine rhamnosyltransferase that catalyzes the transfer of a single rhamnose to elongation factor P (EF-P) on 'Lys-32', a modification required for EF-P-dependent rescue of polyproline stalled ribosomes. This is Protein-arginine rhamnosyltransferase from Pseudomonas putida (strain ATCC 47054 / DSM 6125 / CFBP 8728 / NCIMB 11950 / KT2440).